A 280-amino-acid polypeptide reads, in one-letter code: Release factor glutamine methyltransferase (280 aa).

Residues 120 to 124 (GTGSG), Asp-143, and Asn-186 contribute to the S-adenosyl-L-methionine site. Position 186–189 (186–189 (NPPY)) interacts with substrate.

It belongs to the protein N5-glutamine methyltransferase family. PrmC subfamily.

The enzyme catalyses L-glutaminyl-[peptide chain release factor] + S-adenosyl-L-methionine = N(5)-methyl-L-glutaminyl-[peptide chain release factor] + S-adenosyl-L-homocysteine + H(+). Functionally, methylates the class 1 translation termination release factors RF1/PrfA and RF2/PrfB on the glutamine residue of the universally conserved GGQ motif. The chain is Release factor glutamine methyltransferase from Koribacter versatilis (strain Ellin345).